The following is a 156-amino-acid chain: Small ribosomal subunit protein uS7c (156 aa).

The protein belongs to the universal ribosomal protein uS7 family. In terms of assembly, part of the 30S ribosomal subunit.

It localises to the plastid. The protein localises to the chloroplast. Its function is as follows. One of the primary rRNA binding proteins, it binds directly to 16S rRNA where it nucleates assembly of the head domain of the 30S subunit. This is Small ribosomal subunit protein uS7c (rps7) from Stangeria eriopus (Natal grass cycad).